The chain runs to 476 residues: Proline--tRNA ligase (476 aa).

Belongs to the class-II aminoacyl-tRNA synthetase family. ProS type 3 subfamily. Homodimer.

The protein resides in the cytoplasm. The enzyme catalyses tRNA(Pro) + L-proline + ATP = L-prolyl-tRNA(Pro) + AMP + diphosphate. Its function is as follows. Catalyzes the attachment of proline to tRNA(Pro) in a two-step reaction: proline is first activated by ATP to form Pro-AMP and then transferred to the acceptor end of tRNA(Pro). This Mycoplasma mobile (strain ATCC 43663 / 163K / NCTC 11711) (Mesomycoplasma mobile) protein is Proline--tRNA ligase.